We begin with the raw amino-acid sequence, 608 residues long: MSCKKWCSSSQAKWILAGSVTVTLVLAISLILGLTLHQGTQPGCENDAICGPDADMLDYLMGMGQISHRDGLLVTWYHAANSKKEMAAALNSDVMVLEADVTVEGFNTANETKVPIMAHPPAIYSDNTLQEWLEAVLASSQKGIKLDFKSLKAVGPSLDLLRQLTEAGRIRRPVWINADILRGPNVPISIEINATQFLTLVQEKYPKATISPGFTTLYVPQLPNSTYTQAMVETMQELVGALPQKVTFPVRAVMTRAAWPHFSWLLSQSERYSLTLWQGASDPVSVEDLLFIRDNSAAHQIYYDLFEPVLSQFKQLALNTTRKRTYYTGGSLIPLLQQPKGDGLEVEWLVLEVNGSGRRAAITVPDREGMILLDIGLQEPEAGNPVPILHTPGGPALTLESCLLRLAVHPRRWGIHVNIVEPEALRPSLATLAHLSTLGHLPWPVWVGSTVSHGSFVVPGHIAGRELLTAVAEVFPHVTVAPGWPEEMLDSGYQEQMVTDMLELCQGLRQPVSFQLQAGPLSQSPANTVARLLASSPRATVTVYHSTAGNSHVDLWAGLWAARAVDRTRVYYRISQEYWKDLQADVSSNRPSSRIGPSSVEGFPGESR.

Residues 14–34 (WILAGSVTVTLVLAISLILGL) form a helical membrane-spanning segment. A compositionally biased stretch (polar residues) spans 586–596 (VSSNRPSSRIG). Residues 586–608 (VSSNRPSSRIGPSSVEGFPGESR) form a disordered region.

It belongs to the menorin family.

It localises to the membrane. The chain is Protein FAM151A (Fam151a) from Mus musculus (Mouse).